A 559-amino-acid polypeptide reads, in one-letter code: MSTSRTTTNNKRHTKHVFVTGGVVSSLGKGLTAASLGQLLIARGLNVTMQKLDPYLNVDPGTMNPFEHGEVFVTEDGAETDLDLGHYERFLNRNLTANANVTTGKVYSTVIARERRGGYLGRTVQVIPHITDEIKARILAMGDPDEHGVVPDVVISEVGGTVGDIESQPFLEAARQVRQEIGRENCFFIHCSLVPYLATSGELKTKPTQHSVAELRSIGILPDALVLRCDREVPEALKTKIALMCDVDTDGVVSCPDSESIYTIPETLYHEHLDTFLIRRLDLPFRDVDWTGWRDLLDRVHHPEREITVGIVGKYVDLPDAYLSVVEAIRAAGYAHRTRTRITWITSDDCTTPAGAATALGGVDALVIPGGFGARGIEGKIAAVTYAREHRIPLLGLCLGLQCVVIEAARQAGLEQATSTEFDPGAAQPVISTMAEQQAAVSGQADLGGTMRLGSYPATLEQGSLVAQLYGITEVSERHRHRYEVNNAYRTQIGQRSPLIFSGTSPDGHLVEFVEYDRAVHPFLVATQAHPEYKSRPTQAHPLFSGLVAAALAAAVTDA.

Residues 1–283 (MSTSRTTTNN…DTFLIRRLDL (283 aa)) form an amidoligase domain region. Ser25 provides a ligand contact to CTP. UTP is bound at residue Ser25. ATP contacts are provided by residues 26–31 (SLGKGL) and Asp83. Residues Asp83 and Glu157 each coordinate Mg(2+). CTP-binding positions include 164–166 (DIE), 204–209 (KTKPTQ), and Lys240. Residues 204 to 209 (KTKPTQ) and Lys240 contribute to the UTP site. Positions 308-557 (TVGIVGKYVD…VAAALAAAVT (250 aa)) constitute a Glutamine amidotransferase type-1 domain. Gly371 provides a ligand contact to L-glutamine. The active-site Nucleophile; for glutamine hydrolysis is Cys398. L-glutamine-binding positions include 399–402 (LGLQ), Glu421, and Arg482. Residues His530 and Glu532 contribute to the active site.

It belongs to the CTP synthase family. Homotetramer.

The catalysed reaction is UTP + L-glutamine + ATP + H2O = CTP + L-glutamate + ADP + phosphate + 2 H(+). The enzyme catalyses L-glutamine + H2O = L-glutamate + NH4(+). It carries out the reaction UTP + NH4(+) + ATP = CTP + ADP + phosphate + 2 H(+). It participates in pyrimidine metabolism; CTP biosynthesis via de novo pathway; CTP from UDP: step 2/2. With respect to regulation, allosterically activated by GTP, when glutamine is the substrate; GTP has no effect on the reaction when ammonia is the substrate. The allosteric effector GTP functions by stabilizing the protein conformation that binds the tetrahedral intermediate(s) formed during glutamine hydrolysis. Inhibited by the product CTP, via allosteric rather than competitive inhibition. Catalyzes the ATP-dependent amination of UTP to CTP with either L-glutamine or ammonia as the source of nitrogen. Regulates intracellular CTP levels through interactions with the four ribonucleotide triphosphates. The chain is CTP synthase from Corynebacterium efficiens (strain DSM 44549 / YS-314 / AJ 12310 / JCM 11189 / NBRC 100395).